A 158-amino-acid polypeptide reads, in one-letter code: Urease accessory protein UreE (158 aa).

Belongs to the UreE family.

Its subcellular location is the cytoplasm. Its function is as follows. Involved in urease metallocenter assembly. Binds nickel. Probably functions as a nickel donor during metallocenter assembly. This is Urease accessory protein UreE from Microcystis aeruginosa (strain NIES-843 / IAM M-2473).